We begin with the raw amino-acid sequence, 257 residues long: 5-keto-4-deoxy-D-glucarate aldolase (257 aa).

Residue His51 is the Proton acceptor of the active site. A substrate-binding site is contributed by Gln152. Glu154 contributes to the Mg(2+) binding site. Substrate contacts are provided by Ser179 and Asp180. Residue Asp180 coordinates Mg(2+).

Belongs to the HpcH/HpaI aldolase family. KDGluc aldolase subfamily. Homohexamer; trimer of dimers. It depends on Mg(2+) as a cofactor.

It carries out the reaction 5-dehydro-4-deoxy-D-glucarate = 2-hydroxy-3-oxopropanoate + pyruvate. It catalyses the reaction 2-dehydro-3-deoxy-D-glucarate = 2-hydroxy-3-oxopropanoate + pyruvate. Its pathway is carbohydrate acid metabolism; galactarate degradation; D-glycerate from galactarate: step 2/3. Its function is as follows. Catalyzes the reversible retro-aldol cleavage of both 5-keto-4-deoxy-D-glucarate and 2-keto-3-deoxy-D-glucarate to pyruvate and tartronic semialdehyde. This Citrobacter koseri (strain ATCC BAA-895 / CDC 4225-83 / SGSC4696) protein is 5-keto-4-deoxy-D-glucarate aldolase.